The chain runs to 1191 residues: Zinc finger protein ush (1191 aa).

Disordered stretches follow at residues 1-153 and 169-194; these read MLSS…PKYP and PDAKELTLPDSRLLAPPPLVKPDTQA. Positions 19-28 are enriched in basic and acidic residues; sequence VDSRDSKDLS. Residues 61 to 73 show a composition bias toward acidic residues; that stretch reads IDDDADEDAEFEE. 2 positions are modified to phosphoserine: Ser-116 and Ser-118. Residues 130–151 show a composition bias toward pro residues; the sequence is ATPPSEPEASPCPSPSPCPTPK. A CCHC FOG-type 1 zinc finger spans residues 202–235; sequence LLKPARFMCLPCGIAFSSPSTLEAHQAYYCSHRI. The Zn(2+) site is built by Cys-210, Cys-213, His-226, and Cys-231. The interval 239–274 is disordered; the sequence is DEAGSDKSGAGGSGATAGDAAGLTGGSTEPPAKMAR. Residues 254–266 are compositionally biased toward low complexity; that stretch reads TAGDAAGLTGGST. The C2H2-type 1 zinc finger occupies 279 to 301; that stretch reads YGCTQCSYSADKKVSLNRHMRMH. Residues 304 to 338 form a disordered region; sequence SPAAPTLAGLPSLLQNGIAPPGVTPNPMEDSSSQQ. Residues 335-368 form a CCHC FOG-type 2 zinc finger; it reads SSQQTDRYCSHCDIRFNNIKTYRAHKQHYCSSRR. 4 residues coordinate Zn(2+): Cys-343, Cys-346, His-359, and Cys-364. 3 disordered regions span residues 361–413, 504–540, and 601–635; these read QHYC…ARNK, EPERPSAPSSAAEATEAKSSPPEPKRKEAGLTRESAP, and APSLPSSPSMSPSPKRRAISPRSSGAGSASSMSPP. A compositionally biased stretch (gly residues) spans 383-394; it reads AGSGPGSAGGSI. Low complexity-rich tracts occupy residues 509–523, 602–613, and 620–635; these read SAPSSAAEATEAKSS, PSLPSSPSMSPS, and SPRSSGAGSASSMSPP. 2 consecutive CCHC FOG-type zinc fingers follow at residues 720–753 and 791–824; these read YVKKGVSKCMECNIVFCKYENYLAHKQHYCSARS and PVAYQQLICAACGIKYTSLDNLRAHQNYYCPKGG. Residues Cys-728, Cys-731, His-744, Cys-749, Cys-799, Cys-802, His-815, and Cys-820 each coordinate Zn(2+). 3 consecutive C2H2-type zinc fingers follow at residues 882-907, 910-932, and 983-1006; these read NKCPVCGVVSPTAALAKKHMEMHGTV, YRCSICQYKGNTLRGMRTHIRTH, and FNCDYCNYVSTYKGNVLRHMKLMH. Positions 1011 to 1073 are disordered; it reads INSPSISPDT…HENNNSPIAT (63 aa). Ser-1013, Ser-1015, and Ser-1017 each carry phosphoserine. The span at 1025–1040 shows a compositional bias: polar residues; that stretch reads VTSNPTTNQHSNSDVS. Residues 1113–1146 form a CCHC FOG-type 5 zinc finger; it reads AAEVMKKYCSTCDISFNYVKTYLAHKQFYCKNKP. Cys-1121, Cys-1124, His-1137, and Cys-1142 together coordinate Zn(2+). Ser-1156 carries the phosphoserine modification.

It belongs to the FOG (Friend of GATA) family. Interacts with pnr, although weak this interaction is essential. Interacts with the isoform SrpNC of srp. Interacts with CtBP corepressor. In terms of tissue distribution, first expressed in stage 5 at high levels in the primordium of the amnioserosa. Also expressed in germ band extending embryos in cells of the developing anterior and posterior midgut and in hemocyte precursors present in the cephalic mesoderm. In embryonic stage 8, it is expressed in blood cell precursors. By stage 10, it is expressed in hemocyte precursors that have spread throughout the lateral and ventral head mesoderm. By stage 11, it is expressed in the dorsal ectoderm and in precursor cells of the hemocytes and fat body. As embryogenesis proceeds, it is also expressed in stage 13 plasmatocytes migrating throughout the head mesoderm and down the ventral midline. By late embryogenesis, expression strongly decreases but remains in the dorsal ectoderm during dorsal closure, in cells within, or associated with, the central nervous system, and in plasmatocytes circulating throughout the embryonic hemolymph. During larval development, it is expressed in primary and secondary lobes of lymph glands. Expressed in the dorsal part of the thoracic imaginal disk.

The protein resides in the nucleus. Transcription regulator that modulates expression mediated by transcription factors of the GATA family such as pnr and srp. Represses transcription of proneural achaete-scute complex (AS-C), which is usually activated by pnr. Involved in cardiogenesis, blood, and eye development. During hematopoiesis, it is required to restrict the number of crystal cells, probably via its interaction with the isoform SrpNC of srp. Negatively regulates expression of sr. Probably acts by interacting with the GATA-type zinc finger of proteins such as pnr and srp, possibly antagonizing the interaction between the GATA-type zinc finger and some cofactor. This Drosophila melanogaster (Fruit fly) protein is Zinc finger protein ush (ush).